A 526-amino-acid chain; its full sequence is MGSSSSRVLGQPRRALAQQEQGARARGSARRPDTGDDAASYGFCYCPGSHKRKRSSGACRYCDPDSHREEHEEEGDKQQPLLNTPARKKLRSTSKYIYQTLFLNGENSDIKICALGEEWRLHKIYLCQSGYFSSMFSGSWKESSMNIIELEIPDQNIDVDALQVAFGSLYRDDVLIKPSRVVAILAAACMLQLDGLIQQCGETMKETINVKTVCGYYTSVEIYGLDSVKKKCLEWLLNNLMTHQNVKLFKELGINVMKQLIGSSNLFVMQVEMDVYTTLKKWMFLQLVPSWNGSLKQLLTETDVWFSKQRKDFEGMAFLETEPGKPFVSVFRHLRLQYIISDLASARIIEQDGIVPSEWLSSVYKQQWFAMLRAEQDREVGPQEINKEDLEGNSMRCGRKLAKDGEYYWCWTGFNFGFDLLVIYTNGYIIFKRNTLNQPRSGSVSLRPRRSIAFRLRLASFDSSGKLVCSRTTGYQILILKKDQEQVVMNLDSRFLTFPLYICCNFLYISPEKGIENNRHPENPEN.

A disordered region spans residues 1-85 (MGSSSSRVLG…DKQQPLLNTP (85 aa)). The Nuclear localization signal signature appears at 49-55 (SHKRKRS). Basic and acidic residues predominate over residues 62-77 (CDPDSHREEHEEEGDK). A Nuclear localization signal motif is present at residues 85-91 (PARKKLR). The BTB domain maps to 108 to 178 (SDIKICALGE…LYRDDVLIKP (71 aa)).

As to quaternary structure, interacts with CUL3. Expressed predominantly in testis.

The protein localises to the nucleus matrix. It participates in protein modification; protein ubiquitination. Functionally, possible function in spermatogenesis. Probable substrate-specific adapter of an E3 ubiquitin-protein ligase complex which mediates the ubiquitination and subsequent proteasomal degradation of target proteins. The chain is Germ cell-less protein-like 2 from Homo sapiens (Human).